Reading from the N-terminus, the 309-residue chain is NAD kinase (309 aa).

Residue Asp89 is the Proton acceptor of the active site. NAD(+) is bound by residues 89–90, 163–164, His174, Arg191, Asp193, and 204–209; these read DG, NE, and TAYALS.

This sequence belongs to the NAD kinase family. A divalent metal cation is required as a cofactor.

The protein localises to the cytoplasm. The catalysed reaction is NAD(+) + ATP = ADP + NADP(+) + H(+). In terms of biological role, involved in the regulation of the intracellular balance of NAD and NADP, and is a key enzyme in the biosynthesis of NADP. Catalyzes specifically the phosphorylation on 2'-hydroxyl of the adenosine moiety of NAD to yield NADP. The chain is NAD kinase from Shewanella sp. (strain W3-18-1).